A 602-amino-acid chain; its full sequence is Spermidine-citrate ligase (602 aa).

ATP-binding positions include 286–288, Lys300, and Arg312; that span reads SLR.

This sequence belongs to the IucA/IucC family.

It catalyses the reaction spermidine + citrate + ATP = N(8)-citryl-spermidine + AMP + diphosphate + H(+). It functions in the pathway siderophore biosynthesis; petrobactin biosynthesis. In terms of biological role, involved in the biosynthesis of petrobactin, a catecholate siderophore that functions in both iron acquisition and virulence. Catalyzes the ATP-dependent condensation of citric acid and spermidine to form N(8)-citryl-spermidine. It can also catalyze the condensation of several di- and triamine analogs of spermidine with citric acid and the condensation of the citric acid analog tricarballylic acid with spermidine. Required for growth in iron-depleted medium and for full virulence in a mouse model of infection. The protein is Spermidine-citrate ligase of Bacillus anthracis.